We begin with the raw amino-acid sequence, 584 residues long: Complement component C8 alpha chain (584 aa).

Residues 1–20 form the signal peptide; that stretch reads MFAVVFFILSLMTCQPGVTA. Positions 21–30 are excised as a propeptide; sequence QEKVNQRVRR. The TSP type-1 1 domain occupies 38 to 91; it reads TCQLSNWSEWTDCFPCQDKKYRHRSLLQPNKFGGTICSGDIWDQASCSSSTTCV. Intrachain disulfides connect cysteine 39–cysteine 74, cysteine 50–cysteine 84, cysteine 53–cysteine 90, cysteine 96–cysteine 108, cysteine 102–cysteine 121, cysteine 115–cysteine 130, and cysteine 140–cysteine 177. Tryptophan 44 is a glycosylation site (C-linked (Man) tryptophan). The LDL-receptor class A domain maps to 94 to 132; the sequence is AQCGQDFQCKETGRCLKRHLVCNGDQDCLDGSDEDDCED. Leucine 113, asparagine 116, aspartate 118, aspartate 120, aspartate 126, and glutamate 127 together coordinate Ca(2+). Positions 135-498 constitute an MACPF domain; it reads AIDEDCSQYE…QYLMEFNACR (364 aa). 4 beta stranded membrane-spanning segments follow: residues 248–256, 259–266, 377–384, and 390–395; these read FGVTIGIGP, SPLLVGVG, GGSLGIQY, and VGGGLS. An intrachain disulfide couples cysteine 375 to cysteine 399. Asparagine 437 carries N-linked (GlcNAc...) asparagine glycosylation. 4 cysteine pairs are disulfide-bonded: cysteine 497-cysteine 544, cysteine 499-cysteine 515, cysteine 502-cysteine 517, and cysteine 519-cysteine 528. An EGF-like domain is found at 499-529; sequence CGPCFNNGVPILEGTSCRCQCRLGSLGAACE. The TSP type-1 2 domain occupies 539-583; it reads DGSWSCWSSWSVCRAGIQERRRECDNPAPQNGGASCPGRKVQTQA. Residues tryptophan 542, tryptophan 545, and tryptophan 548 are each glycosylated (C-linked (Man) tryptophan). Cystine bridges form between cysteine 551/cysteine 584 and cysteine 562/cysteine 574. The segment at 562 to 584 is disordered; it reads CDNPAPQNGGASCPGRKVQTQAC.

It belongs to the complement C6/C7/C8/C9 family. Heterotrimer of 3 chains: alpha (C8A), beta (C8B) and gamma (C8G); the alpha and gamma chains are disulfide bonded. Component of the membrane attack complex (MAC), composed of complement C5b, C6, C7, C8A, C8B, C8G and multiple copies of the pore-forming subunit C9.

The protein resides in the secreted. Its subcellular location is the target cell membrane. Its activity is regulated as follows. Membrane attack complex (MAC) assembly is inhibited by CD59, thereby protecting self-cells from damage during complement activation. CD59 acts by binding to the beta-haipins of C8 (C8A and C8B), forming an intermolecular beta-sheet that prevents incorporation of the multiple copies of C9 required for complete formation of the osmolytic pore. MAC assembly is also inhibited by clusterin (CLU) chaperones that inhibit polymerization of C9. Its function is as follows. Component of the membrane attack complex (MAC), a multiprotein complex activated by the complement cascade, which inserts into a target cell membrane and forms a pore, leading to target cell membrane rupture and cell lysis. The MAC is initiated by proteolytic cleavage of C5 into complement C5b in response to the classical, alternative, lectin and GZMK complement pathways. The complement pathways consist in a cascade of proteins that leads to phagocytosis and breakdown of pathogens and signaling that strengthens the adaptive immune system. C8A, together with C8B and C8G, inserts into the target membrane, but does not form pores by itself. During MAC assembly, associates with C5b, C6 and C7 to form the C5b8 intermediate complex that inserts into the target membrane and traverses the bilayer increasing membrane rigidity. The chain is Complement component C8 alpha chain from Homo sapiens (Human).